The sequence spans 84 residues: Short neurotoxin SNTX-1 (84 aa).

An N-terminal signal peptide occupies residues 1-21 (MKTLLLILVVVTIVCLDLVCC). 4 disulfides stabilise this stretch: C25–C46, C39–C63, C65–C76, and C77–C82.

The protein belongs to the three-finger toxin family. Short-chain subfamily. Type I alpha-neurotoxin sub-subfamily. In terms of tissue distribution, expressed by the venom gland.

It localises to the secreted. In terms of biological role, binds to muscle nicotinic acetylcholine receptor (nAChR) and inhibit acetylcholine from binding to the receptor, thereby impairing neuromuscular transmission. This is Short neurotoxin SNTX-1 from Demansia vestigiata (Lesser black whip snake).